Consider the following 227-residue polypeptide: Protein rapunzel (227 aa).

The helical transmembrane segment at 179 to 196 (LAYLFCIGFIALMGYYGI) threads the bilayer.

Its subcellular location is the membrane. This is Protein rapunzel from Danio rerio (Zebrafish).